The primary structure comprises 263 residues: Small ribosomal subunit protein uS3 (263 aa).

In terms of domain architecture, KH type-2 spans 39 to 107; the sequence is VREYLKKKLK…PVHVNIEEIR (69 aa). A disordered region spans residues 211–263; sequence GELPPEAATPREEERRPRRAPRGDRPDGARTGRPGGRGRGPRKADAAPAPEGE. Residues 219–240 show a composition bias toward basic and acidic residues; sequence TPREEERRPRRAPRGDRPDGAR.

It belongs to the universal ribosomal protein uS3 family. As to quaternary structure, part of the 30S ribosomal subunit. Forms a tight complex with proteins S10 and S14.

Its function is as follows. Binds the lower part of the 30S subunit head. Binds mRNA in the 70S ribosome, positioning it for translation. This is Small ribosomal subunit protein uS3 from Bordetella pertussis (strain Tohama I / ATCC BAA-589 / NCTC 13251).